Reading from the N-terminus, the 843-residue chain is MPLSYPHFRKLLLLDDEAGPLEEELPRLADEGLNRRVAEDLNLQLPNVSIPWTHKVGNFTGLYSSTVPTFNPDWLTPSFPDIHLHQDLIHKCEQFVGPLTKNELRRLKLVMPSRFFPKVTKYFPMEKGIKPYYPDNVVNHYFKTRHYLHTLWKAGILYKRESTRSASFCGSPYSWEQELQHGSTSINDSKGHGTESLCTQSSGILSRPSAGSSIQGKFQQSRLGLQQKQGQLANGKQGRSGRIRSWVHTPTRWPVGVESTGTGCAYNIASRSASCFHQSAVREKTNPSLSTSKRHSSTGHAVELHSVPPGSVRSEGKGSVFSCWWLQFRDTEPCSDYCLSHIINLLEDWGPCYEHGQHHIRTPRTPARVTGGVFLVDKNPHNTTESRLVVDFSQFSRGNTRVSWPKFAVPNLQSLTNLLSSNLSWLSLDVSAAFYHLPLHPAAMPHLLVGSCGLSRYVARLSSTSRIHDHQHGTMQNLHNSCSRNLYVSLLLLFQTLGRKLHLYSHPIILGFRKIPMGVGLSPFLLAQFTSAICSVVRRAFPHCLAFSYMDDLVLGAKSVQHLESLYTAVTNFLLSVGIHLNTSKTKRWGYTLNFMGYVIGSWGSLPQDHIVQKLKDCFRKLPVNRPIDWKVCQRIVGLLGFAAPFTQCGYPALMPLYACITAKQAFVFSPTYKAFLCQQYMNLYPVARQRPGLCQVFADATPTGWGLAIGHQRMRGTFVAPLPIHTAELLAACFARSRSGAKLIGTDNSVVLSRKYTSFPWLLGCAANWILRGTSFVYVPSALNPADDPSRGRLGLYRPLLRLPFQPTTGRTSLYAASPSVPSHLPDRVHFASPLHVAWRPP.

Residues 1–177 are terminal protein domain (TP); sequence MPLSYPHFRK…FCGSPYSWEQ (177 aa). Residues 178–346 are spacer; sequence ELQHGSTSIN…YCLSHIINLL (169 aa). Disordered stretches follow at residues 202–221 and 285–310; these read SGIL…FQQS and TNPS…VPPG. A polymerase/reverse transcriptase domain (RT) region spans residues 347–690; it reads EDWGPCYEHG…YMNLYPVARQ (344 aa). One can recognise a Reverse transcriptase domain in the interval 357–600; sequence QHHIRTPRTP…YTLNFMGYVI (244 aa). Mg(2+) contacts are provided by D429, D551, and D552.

The protein belongs to the hepadnaviridae P protein family.

The catalysed reaction is DNA(n) + a 2'-deoxyribonucleoside 5'-triphosphate = DNA(n+1) + diphosphate. It catalyses the reaction Endonucleolytic cleavage to 5'-phosphomonoester.. Its activity is regulated as follows. Activated by host HSP70 and HSP40 in vitro to be able to bind the epsilon loop of the pgRNA. Because deletion of the RNase H region renders the protein partly chaperone-independent, the chaperones may be needed indirectly to relieve occlusion of the RNA-binding site by this domain. Inhibited by several reverse-transcriptase inhibitors: Lamivudine, Adefovir and Entecavir. Functionally, multifunctional enzyme that converts the viral RNA genome into dsDNA in viral cytoplasmic capsids. This enzyme displays a DNA polymerase activity that can copy either DNA or RNA templates, and a ribonuclease H (RNase H) activity that cleaves the RNA strand of RNA-DNA heteroduplexes in a partially processive 3'- to 5'-endonucleasic mode. Neo-synthesized pregenomic RNA (pgRNA) are encapsidated together with the P protein, and reverse-transcribed inside the nucleocapsid. Initiation of reverse-transcription occurs first by binding the epsilon loop on the pgRNA genome, and is initiated by protein priming, thereby the 5'-end of (-)DNA is covalently linked to P protein. Partial (+)DNA is synthesized from the (-)DNA template and generates the relaxed circular DNA (RC-DNA) genome. After budding and infection, the RC-DNA migrates in the nucleus, and is converted into a plasmid-like covalently closed circular DNA (cccDNA). The activity of P protein does not seem to be necessary for cccDNA generation, and is presumably released from (+)DNA by host nuclear DNA repair machinery. This chain is Protein P, found in Hepatitis B virus genotype F1 (isolate Argentina/sa11/2000) (HBV-F).